Reading from the N-terminus, the 309-residue chain is 2-phospho-L-lactate transferase (309 aa).

2 residues coordinate 7,8-didemethyl-8-hydroxy-5-deazariboflavin: aspartate 50 and lysine 89.

It belongs to the CofD family. In terms of assembly, homodimer. The cofactor is Mg(2+).

It carries out the reaction (2S)-lactyl-2-diphospho-5'-guanosine + 7,8-didemethyl-8-hydroxy-5-deazariboflavin = oxidized coenzyme F420-0 + GMP + H(+). It participates in cofactor biosynthesis; coenzyme F420 biosynthesis. Its function is as follows. Catalyzes the transfer of the 2-phospholactate moiety from (2S)-lactyl-2-diphospho-5'-guanosine to 7,8-didemethyl-8-hydroxy-5-deazariboflavin (FO) with the formation of oxidized coenzyme F420-0 and GMP. The sequence is that of 2-phospho-L-lactate transferase from Methanococcus maripaludis (strain C6 / ATCC BAA-1332).